We begin with the raw amino-acid sequence, 318 residues long: Porphobilinogen deaminase (318 aa).

C241 carries the post-translational modification S-(dipyrrolylmethanemethyl)cysteine.

The protein belongs to the HMBS family. As to quaternary structure, monomer. The cofactor is dipyrromethane.

It catalyses the reaction 4 porphobilinogen + H2O = hydroxymethylbilane + 4 NH4(+). It functions in the pathway porphyrin-containing compound metabolism; protoporphyrin-IX biosynthesis; coproporphyrinogen-III from 5-aminolevulinate: step 2/4. Functionally, tetrapolymerization of the monopyrrole PBG into the hydroxymethylbilane pre-uroporphyrinogen in several discrete steps. The chain is Porphobilinogen deaminase from Geotalea daltonii (strain DSM 22248 / JCM 15807 / FRC-32) (Geobacter daltonii).